The following is a 271-amino-acid chain: Putative mitochondrial carrier protein PET8 (271 aa).

3 Solcar repeats span residues 3–76 (STFL…MKQQ), 91–177 (AEVL…LKKK), and 187–270 (VSAW…VHSL). The next 6 helical transmembrane spans lie at 6 to 26 (LASLVSGAAAGTSTDVVFFPI), 51 to 71 (GLGSAVVASAPGASLFFVTYD), 97 to 117 (MLSSSLGEMSACLVRVPAEVI), 152 to 168 (GWWTTIMREIPFTCIQF), 193 to 213 (AVCGSLAGGIAAAATTPLDVL), and 251 to 271 (MWISAGGAIFLGVYEAVHSLF).

It belongs to the mitochondrial carrier (TC 2.A.29) family.

It is found in the mitochondrion inner membrane. This Eremothecium gossypii (strain ATCC 10895 / CBS 109.51 / FGSC 9923 / NRRL Y-1056) (Yeast) protein is Putative mitochondrial carrier protein PET8 (PET8).